The chain runs to 755 residues: uncharacterized protein (755 aa).

7 disordered regions span residues 1 to 44, 72 to 91, 99 to 174, 393 to 467, 523 to 545, 584 to 672, and 734 to 755; these read MAAP…AAAQ, AEHS…ATAQ, FSLS…IPHY, TTNV…SSSR, LPKT…EGGG, VSSS…LPSG, and QAAT…PRRK. Composition is skewed to low complexity over residues 10–25 and 35–44; these read TTTQ…TTTT and TTTGSGAAAQ. 3 stretches are compositionally biased toward low complexity: residues 112–130, 139–151, and 393–412; these read ISSS…NASS, SPDL…LSGS, and TTNV…TKST. Residues 429 to 446 show a composition bias toward acidic residues; the sequence is IEEDTIQFDDPGQGEDDN. Residues 452-462 are compositionally biased toward pro residues; that stretch reads NTPPPPGPPPN. The span at 536–545 shows a compositional bias: gly residues; that stretch reads ATGGVTEGGG. The segment covering 590–599 has biased composition (polar residues); that stretch reads LPQPQVATTI. 2 stretches are compositionally biased toward low complexity: residues 600-666 and 740-755; these read TPQA…QTPQ and SQPS…PRRK.

This sequence belongs to the chlamydial CPn_0572/CT_456/TC_0741 family.

This is an uncharacterized protein from Chlamydia pneumoniae (Chlamydophila pneumoniae).